The following is a 113-amino-acid chain: MICLKILRFYQKFLSPLKPAACRYYPSCSEYALWQFQKKNFFLAFFSTFFRILRCNPFFKGGFDYPRVSKNFYPINLCFKPIFLAKKQLCFLYIPYKNKSFYLIKIIFKRTNQ.

The protein belongs to the UPF0161 family.

The protein localises to the cell inner membrane. Its function is as follows. Could be involved in insertion of integral membrane proteins into the membrane. The polypeptide is Putative membrane protein insertion efficiency factor (Campylobacter jejuni subsp. jejuni serotype O:23/36 (strain 81-176)).